The chain runs to 346 residues: UDP-3-O-acylglucosamine N-acyltransferase (346 aa).

His240 serves as the catalytic Proton acceptor.

This sequence belongs to the transferase hexapeptide repeat family. LpxD subfamily. As to quaternary structure, homotrimer.

It catalyses the reaction a UDP-3-O-[(3R)-3-hydroxyacyl]-alpha-D-glucosamine + a (3R)-hydroxyacyl-[ACP] = a UDP-2-N,3-O-bis[(3R)-3-hydroxyacyl]-alpha-D-glucosamine + holo-[ACP] + H(+). It participates in bacterial outer membrane biogenesis; LPS lipid A biosynthesis. Catalyzes the N-acylation of UDP-3-O-acylglucosamine using 3-hydroxyacyl-ACP as the acyl donor. Is involved in the biosynthesis of lipid A, a phosphorylated glycolipid that anchors the lipopolysaccharide to the outer membrane of the cell. This chain is UDP-3-O-acylglucosamine N-acyltransferase, found in Bacteroides fragilis (strain ATCC 25285 / DSM 2151 / CCUG 4856 / JCM 11019 / LMG 10263 / NCTC 9343 / Onslow / VPI 2553 / EN-2).